The chain runs to 245 residues: tRNA pseudouridine synthase A (245 aa).

Residue Asp-52 is the Nucleophile of the active site. Residue Tyr-112 coordinates substrate.

The protein belongs to the tRNA pseudouridine synthase TruA family. As to quaternary structure, homodimer.

The enzyme catalyses uridine(38/39/40) in tRNA = pseudouridine(38/39/40) in tRNA. Formation of pseudouridine at positions 38, 39 and 40 in the anticodon stem and loop of transfer RNAs. This is tRNA pseudouridine synthase A from Dictyoglomus thermophilum (strain ATCC 35947 / DSM 3960 / H-6-12).